We begin with the raw amino-acid sequence, 179 residues long: Large ribosomal subunit protein uL5 (179 aa).

The protein belongs to the universal ribosomal protein uL5 family. Part of the 50S ribosomal subunit; part of the 5S rRNA/L5/L18/L25 subcomplex. Contacts the 5S rRNA and the P site tRNA. Forms a bridge to the 30S subunit in the 70S ribosome.

In terms of biological role, this is one of the proteins that bind and probably mediate the attachment of the 5S RNA into the large ribosomal subunit, where it forms part of the central protuberance. In the 70S ribosome it contacts protein S13 of the 30S subunit (bridge B1b), connecting the 2 subunits; this bridge is implicated in subunit movement. Contacts the P site tRNA; the 5S rRNA and some of its associated proteins might help stabilize positioning of ribosome-bound tRNAs. This is Large ribosomal subunit protein uL5 from Shewanella sp. (strain MR-4).